Reading from the N-terminus, the 130-residue chain is Small ribosomal subunit protein uS11 (130 aa).

This sequence belongs to the universal ribosomal protein uS11 family. Part of the 30S ribosomal subunit. Interacts with proteins S7 and S18. Binds to IF-3.

Its function is as follows. Located on the platform of the 30S subunit, it bridges several disparate RNA helices of the 16S rRNA. Forms part of the Shine-Dalgarno cleft in the 70S ribosome. The chain is Small ribosomal subunit protein uS11 from Prochlorococcus marinus (strain AS9601).